The primary structure comprises 174 residues: Small ribosomal subunit protein uS4 (174 aa).

Residues 105–169 form the S4 RNA-binding domain; sequence RRLQTVAYRK…SPLADDLHPE (65 aa).

It belongs to the universal ribosomal protein uS4 family. In terms of assembly, part of the 30S ribosomal subunit. Contacts protein S5. The interaction surface between S4 and S5 is involved in control of translational fidelity.

Functionally, one of the primary rRNA binding proteins, it binds directly to 16S rRNA where it nucleates assembly of the body of the 30S subunit. With S5 and S12 plays an important role in translational accuracy. This is Small ribosomal subunit protein uS4 from Natronomonas pharaonis (strain ATCC 35678 / DSM 2160 / CIP 103997 / JCM 8858 / NBRC 14720 / NCIMB 2260 / Gabara) (Halobacterium pharaonis).